The primary structure comprises 345 residues: Tryptophan--tRNA ligase (345 aa).

ATP is bound by residues 12–14 (RPT) and 20–21 (GH). Positions 13–21 (PTGKLHLGH) match the 'HIGH' region motif. Asp-144 lines the L-tryptophan pocket. ATP-binding positions include 156 to 158 (GKD), Leu-194, and 202 to 206 (KMSKS). Residues 202-206 (KMSKS) carry the 'KMSKS' region motif.

This sequence belongs to the class-I aminoacyl-tRNA synthetase family. As to quaternary structure, homodimer.

It is found in the cytoplasm. It carries out the reaction tRNA(Trp) + L-tryptophan + ATP = L-tryptophyl-tRNA(Trp) + AMP + diphosphate + H(+). Catalyzes the attachment of tryptophan to tRNA(Trp). This Chlamydia caviae (strain ATCC VR-813 / DSM 19441 / 03DC25 / GPIC) (Chlamydophila caviae) protein is Tryptophan--tRNA ligase.